A 498-amino-acid polypeptide reads, in one-letter code: ATP synthase subunit beta, chloroplastic (498 aa).

172–179 (GGAGVGKT) lines the ATP pocket.

It belongs to the ATPase alpha/beta chains family. In terms of assembly, F-type ATPases have 2 components, CF(1) - the catalytic core - and CF(0) - the membrane proton channel. CF(1) has five subunits: alpha(3), beta(3), gamma(1), delta(1), epsilon(1). CF(0) has four main subunits: a(1), b(1), b'(1) and c(9-12).

The protein localises to the plastid. The protein resides in the chloroplast thylakoid membrane. It catalyses the reaction ATP + H2O + 4 H(+)(in) = ADP + phosphate + 5 H(+)(out). Functionally, produces ATP from ADP in the presence of a proton gradient across the membrane. The catalytic sites are hosted primarily by the beta subunits. The polypeptide is ATP synthase subunit beta, chloroplastic (Nymphaea alba (White water-lily)).